Here is a 382-residue protein sequence, read N- to C-terminus: Lipid-A-disaccharide synthase (382 aa).

It belongs to the LpxB family.

It carries out the reaction 2-N,3-O-bis[(3R)-3-hydroxytetradecanoyl]-alpha-D-glucosaminyl 1-phosphate + UDP-2-N,3-O-bis[(3R)-3-hydroxytetradecanoyl]-alpha-D-glucosamine = lipid A disaccharide (E. coli) + UDP + H(+). The enzyme catalyses a lipid X + a UDP-2-N,3-O-bis[(3R)-3-hydroxyacyl]-alpha-D-glucosamine = a lipid A disaccharide + UDP + H(+). It functions in the pathway glycolipid biosynthesis; lipid IV(A) biosynthesis; lipid IV(A) from (3R)-3-hydroxytetradecanoyl-[acyl-carrier-protein] and UDP-N-acetyl-alpha-D-glucosamine: step 5/6. Its function is as follows. Condensation of UDP-2,3-diacylglucosamine and 2,3-diacylglucosamine-1-phosphate to form lipid A disaccharide, a precursor of lipid A, a phosphorylated glycolipid that anchors the lipopolysaccharide to the outer membrane of the cell. The protein is Lipid-A-disaccharide synthase of Shigella boydii serotype 18 (strain CDC 3083-94 / BS512).